The chain runs to 393 residues: (S)-mandelate dehydrogenase (393 aa).

The FMN hydroxy acid dehydrogenase domain occupies 1 to 377 (MSQNLFNVED…SPDYLQNEGV (377 aa)). (S)-mandelate is bound at residue tyrosine 26. Residues 79 to 81 (PTG), serine 108, and glutamine 129 each bind FMN. Tyrosine 131 serves as a coordination point for (S)-mandelate. Residue threonine 156 participates in FMN binding. Arginine 165 contacts (S)-mandelate. An FMN-binding site is contributed by lysine 250. (S)-mandelate is bound by residues histidine 274 and arginine 277. Histidine 274 (proton acceptor) is an active-site residue. Residues 303-307 (DSGFR) and 326-327 (GR) contribute to the FMN site.

Belongs to the FMN-dependent alpha-hydroxy acid dehydrogenase family. As to quaternary structure, homotetramer. The cofactor is FMN.

Its subcellular location is the cell inner membrane. The catalysed reaction is (S)-mandelate + A = phenylglyoxylate + AH2. The protein operates within aromatic compound metabolism; (R)-mandelate degradation; benzoate from (R)-mandelate: step 2/4. Its function is as follows. Catalyzes the dehydrogenation of (S)-mandelate to phenylglyoxylate (benzoylformate). Is likely involved in the utilization of mandelate as a sole source of carbon and energy for growth. Active in vitro with the artificial electron acceptors 2,6-dichlorophenolindophenol (DCPIP) or ferricyanide, but in vivo most likely transfer the electron pair from the reduced flavin to a component of the electron transport chain in the membrane, possibly a quinone. Shows very low activity with oxygen as the electron acceptor, and also with 3-indolelactate and medium chain 2-hydroxyacids as substrates. The protein is (S)-mandelate dehydrogenase of Pseudomonas putida (Arthrobacter siderocapsulatus).